We begin with the raw amino-acid sequence, 673 residues long: Xaa-Pro aminopeptidase 2 (673 aa).

An N-terminal signal peptide occupies residues 1–21; that stretch reads MAQACWGCYPWLVLICACAWG. N34, N48, and N64 each carry an N-linked (GlcNAc...) asparagine glycan. Residue R115 participates in substrate binding. Residues N277, N290, and N294 are each glycosylated (N-linked (GlcNAc...) asparagine). H429 lines the substrate pocket. Residue D449 participates in Mn(2+) binding. Positions 449, 460, and 523 each coordinate Zn(2+). Substrate is bound by residues H523, H532, and E554. Zn(2+) is bound by residues E554 and E568. A649 carries the GPI-anchor amidated alanine lipid modification. The propeptide at 650 to 673 is removed in mature form; the sequence is RAAPTTSLGSLMTVSALAILGWSV.

It belongs to the peptidase M24B family. Homotrimer. Zn(2+) serves as cofactor. In terms of processing, N-glycosylated. Kidney.

It localises to the cell membrane. It catalyses the reaction Release of any N-terminal amino acid, including proline, that is linked to proline, even from a dipeptide or tripeptide.. Its activity is regulated as follows. Inhibited by apstatin and the metal ion chelator EDTA. Potently inhibited by the converting enzyme inhibitors cilazaprilat; enalaprilat; L155,212; ramiprilat and YS 980. Also inhibited to a lesser extent by indolaprilat; quinaprilat; spiraprilat; captopril and zofenoprilat. Its function is as follows. Membrane-bound metalloprotease which catalyzes the removal of a penultimate prolyl residue from the N-termini of peptides, such as Arg-Pro-Pro. May play a role in the metabolism of the vasodilator bradykinin. The chain is Xaa-Pro aminopeptidase 2 (XPNPEP2) from Sus scrofa (Pig).